A 570-amino-acid polypeptide reads, in one-letter code: Molecular chaperone MKKS (570 aa).

192–199 (GHIILGKS) is an ATP binding site. The segment at 198–370 (KSLIVPLKGQ…FHLIPNEATI (173 aa)) is substrate-binding apical domain.

The protein belongs to the TCP-1 chaperonin family. As to quaternary structure, component of a complex composed at least of MKKS, BBS10, BBS12, TCP1, CCT2, CCT3, CCT4, CCT5 and CCT8. Interacts with STUB1. Interacts with BBS2 (via coiled coil domain). Interacts with CCDC28B. Interacts with BBS12. Interacts with SMARCC1, a component of the SWI/SNF complexes; the interaction takes place predominantly in the cytoplasm and may modulate SMARCC1 location. Interacts with DLEC1.

Its subcellular location is the cytoplasm. The protein resides in the cytoskeleton. It is found in the microtubule organizing center. The protein localises to the centrosome. It localises to the cytosol. Its subcellular location is the nucleus. In terms of biological role, probable molecular chaperone that assists the folding of proteins upon ATP hydrolysis. Plays a role in the assembly of BBSome, a complex involved in ciliogenesis regulating transports vesicles to the cilia. May play a role in protein processing in limb, cardiac and reproductive system development. May play a role in cytokinesis. In Pongo abelii (Sumatran orangutan), this protein is Molecular chaperone MKKS (MKKS).